A 205-amino-acid chain; its full sequence is MNTEIIVLFIIHFIMINENVFIALLHYPAMDKDGKIIVTSFTTMDLHDIARPARAYEINKYYIVQPIDAQRIVIQRQINYWLSEEGRKANPTRYEIVQLVRLAYTLDEVIEDIEKERGRRPLLVGTDARTYPNTVKYSWLRNEIQKRDRDWLIVFGTGHGIPPDLMNTFDYILEPIYGAGDWNHLSVRNAVAIILDRLFSRNRCD.

The chain crosses the membrane as a helical span at residues 5–27 (IIVLFIIHFIMINENVFIALLHY).

To T.maritima TM1570.

It is found in the membrane. This is an uncharacterized protein from Aquifex aeolicus (strain VF5).